The sequence spans 148 residues: FAD synthase (148 aa).

Residues 9–10 (TF), 14–17 (HPGH), Asn-92, and Tyr-119 contribute to the ATP site.

The protein belongs to the archaeal FAD synthase family. As to quaternary structure, homodimer. The cofactor is a divalent metal cation.

It carries out the reaction FMN + ATP + H(+) = FAD + diphosphate. It functions in the pathway cofactor biosynthesis; FAD biosynthesis; FAD from FMN: step 1/1. In terms of biological role, catalyzes the transfer of the AMP portion of ATP to flavin mononucleotide (FMN) to produce flavin adenine dinucleotide (FAD) coenzyme. The polypeptide is FAD synthase (Methanolacinia petrolearia (strain DSM 11571 / OCM 486 / SEBR 4847) (Methanoplanus petrolearius)).